The primary structure comprises 321 residues: Protein FAM110C (321 aa).

Disordered regions lie at residues 1–84 (MRAL…APAP) and 111–203 (RGSG…SQSD). 2 stretches are compositionally biased toward basic and acidic residues: residues 15-46 (LLPR…DRAK) and 131-145 (GKDK…DEGK). The span at 169 to 181 (APAARSAAPSSVP) shows a compositional bias: low complexity. The residue at position 241 (S241) is a Phosphoserine.

Belongs to the FAM110 family. As to quaternary structure, interacts with AKT1; the interaction is transient and follows AKT1 activation. Interacts with PPP2CA and alpha-tubulin. As to expression, detected in stomach, thyroid, trachea, adrenal gland and testis, and at low levels in prostate, ovary, intestine, colon, spinal cord and lymph node.

It localises to the cytoplasm. The protein localises to the cytoskeleton. The protein resides in the microtubule organizing center. It is found in the centrosome. Its subcellular location is the spindle pole. It localises to the nucleus. May play a role in microtubule organization. May play a role in cell spreading and cell migration of epithelial cells; the function may involve the AKT1 signaling pathway. The chain is Protein FAM110C (FAM110C) from Homo sapiens (Human).